Reading from the N-terminus, the 285-residue chain is Phasyl DNA replicon protein arp (285 aa).

Essential for autonomous replication of the phasyl DNA replicon. This is Phasyl DNA replicon protein arp (arp) from Escherichia coli.